Reading from the N-terminus, the 209-residue chain is Mitochondrial import inner membrane translocase subunit Tim23 (209 aa).

Transmembrane regions (helical) follow at residues 73–93, 125–145, and 172–194; these read FELAFFTIGGCCMTGAAFGAM, ALWANTLGSLALLYSAFGVII, and GGLRGAARGGLAGLTLTGLYALY.

Belongs to the Tim17/Tim22/Tim23 family. In terms of assembly, component of the TIM23 complex at least composed of TIMM23, TIMM17 (TIMM17A or TIMM17B) and TIMM50; within this complex, directly interacts with TIMM50. The complex interacts with the TIMM44 component of the PAM complex and with DNAJC15. Upon mitochondrial depolarization, interacts with PINK1; the interaction is required for PINK1 accumulation at the outer mitochondrial membrane, kinase activation by autophosphorylation and PRKN recruitement to mitochondria.

Its subcellular location is the mitochondrion inner membrane. Essential component of the TIM23 complex, a complex that mediates the translocation of transit peptide-containing proteins across the mitochondrial inner membrane. Has a role in the activation of stress-induced mitophagy by protecting PINK1 from OMA1-mediated degradation and facilitating its accumulation at the outer mitochondrial membrane in response to depolarization. The sequence is that of Mitochondrial import inner membrane translocase subunit Tim23 (TIMM23) from Bos taurus (Bovine).